A 297-amino-acid chain; its full sequence is Salivary glue protein Sgs-4 (297 aa).

Positions 1 to 21 (MRLELLVVLLVGLAALAPSGS) are cleaved as a signal peptide. Tandem repeats lie at residues 26-32 (TEPPRCE), 33-39 (TEPPRCE), 40-46 (TEPPRCE), 47-53 (TEPPRCE), 54-60 (TEPPRCE), 61-67 (TTTPKCE), 68-74 (TTPPTCR), 75-81 (TEPPTCK), 82-88 (TEPPTCR), 89-95 (TEPPTCK), 96-102 (TKPPTCR), 103-109 (TEPPTCR), 110-116 (TEPPTCK), 117-123 (TKPPTCK), 124-130 (TEPPTCK), 131-137 (TEPPTCR), 138-144 (TEPPTCK), 145-151 (TEPPTCR), 152-158 (TEPPTCK), 159-165 (TEPPTCK), and 166-172 (TEPPTCK). Residues 26-84 (TEPPRCETEPPRCETEPPRCETEPPRCETEPPRCETTTPKCETTPPTCRTEPPTCKTEP) form a disordered region. A 22 X 7 AA approximate tandem repeats of T-[ETK]-[PT]-P-[RKT]-C-[ERK] region spans residues 26-179 (TEPPRCETEP…TCKTEPPCEK (154 aa)). A compositionally biased stretch (basic and acidic residues) spans 27–58 (EPPRCETEPPRCETEPPRCETEPPRCETEPPR). The span at 59 to 84 (CETTTPKCETTPPTCRTEPPTCKTEP) shows a compositional bias: low complexity. The segment covering 141 to 174 (PTCKTEPPTCRTEPPTCKTEPPTCKTEPPTCKTE) has biased composition (low complexity). Disordered regions lie at residues 141–218 (PTCK…SGCG) and 243–297 (PDSK…KGGC). One copy of the 22; approximate repeat lies at 173–179 (TEPPCEK). 2 stretches are compositionally biased toward basic residues: residues 181–208 (CTKR…HHNR) and 282–291 (NTTKKPRKTQ).

As to expression, salivary gland.

The protein localises to the secreted. In Drosophila melanogaster (Fruit fly), this protein is Salivary glue protein Sgs-4 (Sgs4).